The following is a 175-amino-acid chain: Alpha-crystallin B chain (175 aa).

M1 is subject to N-acetylmethionine. Position 19 is a phosphoserine (S19). S41 carries an O-linked (GlcNAc) serine glycan. A phosphoserine mark is found at S45 and S59. The sHSP domain maps to 56 to 164 (RAPSWIDTGL…PERTIPITRE (109 aa)). Position 83 (H83) interacts with Zn(2+). Residue K92 is modified to N6-acetyllysine. H104, E106, H111, and H119 together coordinate Zn(2+). Positions 139–175 (SDGVLTMNGPRKQASGPERTIPITREEKPAVTAAPKK) are disordered. K166 is modified (N6-acetyllysine). T170 carries an O-linked (GlcNAc) threonine glycan.

Belongs to the small heat shock protein (HSP20) family. As to quaternary structure, heteromer composed of three CRYAA and one CRYAB subunits. Aggregates with homologous proteins, including the small heat shock protein HSPB1, to form large heteromeric complexes. Inter-subunit bridging via zinc ions enhances stability, which is crucial as there is no protein turn over in the lens. Interacts with HSPBAP1 and TTN/titin. Interacts with TMEM109; in the cellular response to DNA damage. Interacts with DES; binds rapidly during early stages of DES filament assembly and a reduced binding seen in the later stages. Interacts with ATP6V1A and with MTOR, forming a ternary complex.

It localises to the cytoplasm. Its subcellular location is the nucleus. The protein localises to the secreted. The protein resides in the lysosome. Its function is as follows. May contribute to the transparency and refractive index of the lens. Has chaperone-like activity, preventing aggregation of various proteins under a wide range of stress conditions. In lens epithelial cells, stabilizes the ATP6V1A protein, preventing its degradation by the proteasome. The chain is Alpha-crystallin B chain (CRYAB) from Ovis aries (Sheep).